A 393-amino-acid chain; its full sequence is Prokineticin receptor 1 (393 aa).

Residues 1-62 (METTVGTLGE…TNSRTFFAAK (62 aa)) lie on the Extracellular side of the membrane. N-linked (GlcNAc...) asparagine glycosylation is present at asparagine 11. A helical membrane pass occupies residues 63 to 83 (IVIGMALVGIMLVCGIGNFIF). Residues 84–98 (ITALARYKKLRNLTN) are Cytoplasmic-facing. The helical transmembrane segment at 99-119 (LLIANLAISDFLVAIVCCPFE) threads the bilayer. Residues 120 to 145 (MDYYVVRQLSWEHGHVLCASVNYLRT) lie on the Extracellular side of the membrane. Residues cysteine 137 and cysteine 217 are joined by a disulfide bond. The helical transmembrane segment at 146–166 (VSLYVSTNALLAIAIDRYLAI) threads the bilayer. Residues 167–179 (VHPLRPRMKCQTA) are Cytoplasmic-facing. Residues 180–200 (AGLIFLVWSVSILIAIPAAYF) form a helical membrane-spanning segment. At 201 to 232 (TTETVLVIVESQEKIFCGQIWPVDQQFYYRSY) the chain is on the extracellular side. The chain crosses the membrane as a helical span at residues 233–253 (FLLVFGLEFVGPVIAMTLCYA). Topologically, residues 254 to 282 (RVSRELWFKAVPGFQTEQIRRRLRCRRRT) are cytoplasmic. The chain crosses the membrane as a helical span at residues 283–303 (VLGLVCVLSAYVLCWAPFYGF). Over 304–322 (TIVRDFFPSVFVKEKHYLT) the chain is Extracellular. A helical membrane pass occupies residues 323-343 (AFYVVECIAMSNSMINTLCFV). Residues 344-393 (TVRNNTSKYLKRILRLQWRASPSGSKASADLDLRTTGIPATEEVDCIRLK) are Cytoplasmic-facing.

This sequence belongs to the G-protein coupled receptor 1 family. Widely expressed in peripheral tissues with the highest level in the spleen and moderate levels in the adipose tissues, thymus, lung, kidney, testis, uterus and small intestine.

It localises to the cell membrane. Receptor for prokineticin 1. Exclusively coupled to the G(q) subclass of heteromeric G proteins. Activation leads to mobilization of calcium, stimulation of phosphoinositide turnover and activation of p44/p42 mitogen-activated protein kinase. May play a role during early pregnancy. The polypeptide is Prokineticin receptor 1 (Prokr1) (Rattus norvegicus (Rat)).